A 630-amino-acid polypeptide reads, in one-letter code: MDLTKIEHPRVVKTMSIPQLKQLSADIRRFLIEKLSKTGGHIGPNLGVVELTIALHREFDSPKDKLIWDVGHQSYVHKILTGRAAEFDTLRQYKGLSGFPKRSESEHDVWETGHSSTSLSAAMGMAIARDLKGTDEYIVPIIGDGALTGGMALEALNHIGHEKTDMIVILNDNEMSIAPNVGALHNILGRLRTAGKYQWVKDELELLLKRIPAVGGKLAATAERLKDSLKYLLVSGVFFEELGFTYLGPVDGHDFEDLLENLRYAKKVKGPVLVHVITKKGKGYSPAENDKVGTWHGTGPYKIETGTFVKTKEGGPSWSGLVSETVRRIARTDPRIVAITPAMPVGSKLEGFASEFPDRMFDVGIAEQHATTLAAGLATQGMKPFLAIYSTFLQRAYDQVVHDVCRQNLNVFFAIDRAGLVGADGETHQGVFDIAFLRHVPNLVLMMPKDENEGQHMVYTALRYDDGPIAMRFPRGNGLGVPLDEELKEIPIGTWEVLRDGSDAVILTFGTTISMALEAAEQLARDGVSVKVVNARFLKPMDEAMLHELLESRLPILTIEEAVLQGGFGSSVLEFAHDHGYHQAVIERMGIPDRFIEHGSVSELLDEIGLTAAHVADRIKTIMPRKQKRA.

Thiamine diphosphate is bound by residues histidine 72 and 113–115; that span reads GHS. Aspartate 144 contributes to the Mg(2+) binding site. Thiamine diphosphate contacts are provided by residues 145-146, asparagine 173, tyrosine 284, and glutamate 367; that span reads GA. Residue asparagine 173 coordinates Mg(2+).

The protein belongs to the transketolase family. DXPS subfamily. As to quaternary structure, homodimer. The cofactor is Mg(2+). Thiamine diphosphate is required as a cofactor.

The enzyme catalyses D-glyceraldehyde 3-phosphate + pyruvate + H(+) = 1-deoxy-D-xylulose 5-phosphate + CO2. Its pathway is metabolic intermediate biosynthesis; 1-deoxy-D-xylulose 5-phosphate biosynthesis; 1-deoxy-D-xylulose 5-phosphate from D-glyceraldehyde 3-phosphate and pyruvate: step 1/1. Catalyzes the acyloin condensation reaction between C atoms 2 and 3 of pyruvate and glyceraldehyde 3-phosphate to yield 1-deoxy-D-xylulose-5-phosphate (DXP). This is 1-deoxy-D-xylulose-5-phosphate synthase from Geobacillus thermodenitrificans (strain NG80-2).